We begin with the raw amino-acid sequence, 1087 residues long: MADHVQSLAQLENLCKQLYETTDTATRLQAEKALVEFTNSPDCLSKCQLLLERGSSSYSQLLAATCLTKLVSRTNNPLPLEQRIDIRNYVLNYLATRPKLATFVTQALIQLYARITKLGWFDCQKDEYVFRNVITDVTRFLQDSVEHCIIGVTILSQLTNEINQADTTHPLTKHRKIASSFRDSSLFDIFTLSCNLLKQASGKNLNLNDESQHGLLMQLLKLTHNCLNFDFIGTSTDESSDDLCTVQIPTSWRSAFLDSSTLQLFFDLYHSIPPSFSPLVLSCLVQIASVRRSLFNNAERAKFLSHLVDGVKRILENPQSLSDPNNYHEFCRLLARLKSNYQLGELVKVENYPEVIRLIANFTVTSLQHWEFAPNSVHYLLSLWQRLAASVPYVKATEPHMLETYTPEVTKAYITSRLESVHIILRDGLEDPLDDTGLVQQQLDQLSTIGRCEYEKTCALLVQLFDQSAQSYQELLQSATASPMDVAVQEGRLTWLVYIIGAVIGGRVSFASTDEQDAMDGELVCRVLQLMNLTDSRLAQAGNEKLELAMLSFFEQFRKIYIGDQVQKSSKLYRRLSEVLGLNDETMVLSVFIGKIITNLKYWGRCEPITSKTLQLLNDLSIGYSSVRKLVKLSAVQFMLNNHTSEHFSFLGINNQSNLTDMRCRTTFYTALGRLLMVDLGEDEDQYEQFMLPLTAAFETVAQMFSTNTFNEQEAKRTLVGLVRDLRGIAFAFNAKTSFMMLFEWIYPSYMPILQRAIELWYHDPACTTPVLKLMAELVHNRSQRLQFDVSSPNGILLFRETSKMITTYGNRILTLGEVPKDQVYALKLKGISICFSMLKAALSGSYVNFGVFRLYGDDALDNALQTFIKLLLSIPHSDLLDYPKLSQSYYSLLEVLTQDHMNFIASLEPHVIMYILSSISEGLTALDTMVCTGCCSCLDHIVTYLFKQLSRSTKKRTTPLTQESDRFLHIMQQHPEMIQQMLSTVLNIIIFEDCRNQWSMSRPLLGLILLNEKYFSDLRNSIVNSQPPEKQQAMHLCFENLMEGIERNLLTKNRDRFTQNLSAFRREVNDSMKNSPYGVNSNDMMS.

The Importin N-terminal domain occupies 30 to 96; it reads AEKALVEFTN…RNYVLNYLAT (67 aa).

Belongs to the exportin family.

It localises to the cytoplasm. The protein localises to the nucleus. Functionally, mediates the nuclear export of proteins (cargos) with broad substrate specificity. In Gallus gallus (Chicken), this protein is Exportin-7 (XPO7).